The chain runs to 692 residues: Glycine--tRNA ligase beta subunit (692 aa).

Belongs to the class-II aminoacyl-tRNA synthetase family. Tetramer of two alpha and two beta subunits.

It is found in the cytoplasm. The enzyme catalyses tRNA(Gly) + glycine + ATP = glycyl-tRNA(Gly) + AMP + diphosphate. The chain is Glycine--tRNA ligase beta subunit from Limosilactobacillus fermentum (strain NBRC 3956 / LMG 18251) (Lactobacillus fermentum).